Reading from the N-terminus, the 168-residue chain is Photosystem I assembly protein Ycf3 (168 aa).

TPR repeat units lie at residues 35 to 68 (AFTYYRDGMSAQSEGNYAEALQNYYEAMRLEIDP), 72 to 105 (SYILYNIGLIHTSNGEHTKALEYYFRALERNPFL), and 120 to 153 (GEQAIRQGDSEIAEAWFDQAAEYWKQAIALTPGN).

The protein belongs to the Ycf3 family.

Its subcellular location is the plastid. The protein localises to the chloroplast thylakoid membrane. Its function is as follows. Essential for the assembly of the photosystem I (PSI) complex. May act as a chaperone-like factor to guide the assembly of the PSI subunits. The polypeptide is Photosystem I assembly protein Ycf3 (Helianthus annuus (Common sunflower)).